The following is a 358-amino-acid chain: Homer protein homolog 3 (358 aa).

Positions 1–80 (MSTAREQPIF…TKTSQKFGQW (80 aa)) are required for interaction with NFATC2. Residues 1 to 113 (MSTAREQPIF…EKFQEVKEAA (113 aa)) enclose the WH1 domain. Residues 95-122 (SEQQLTQFAEKFQEVKEAARLAREKSQD) are a coiled coil. A phosphoserine mark is found at S120 and S158. Disordered stretches follow at residues 137–168 (QVPPSPLVSTNGPEEKLFRSQSADAPGPTERE) and 239–296 (AEPV…QVQD). Residues 190–355 (ALQDSNQRLA…LREGLARLAE (166 aa)) are a coiled coil. The segment covering 257 to 267 (LEARVQTKDQE) has biased composition (basic and acidic residues). The span at 268–277 (IQTLKNQSTG) shows a compositional bias: polar residues. Over residues 280–290 (EAPDTAEREET) the composition is skewed to basic and acidic residues.

The protein belongs to the Homer family. As to quaternary structure, tetramer. Encodes coiled-coil structures that mediate homo- and heteromultimerization. Interacts with NFATC2; interaction is calcium independent; interaction competes with PPP3CA for NFATC2 binding; interaction is reduced by AKT activation. Interacts with NFATC1 and NFATC4. Interacts with SHANK1; forms a high-order complex at least composed of SHANK1 and HOMER3; the complex formation is regulated by CAMK2A-mediated phosphorylation.

Its subcellular location is the cytoplasm. It localises to the postsynaptic density. The protein localises to the synapse. Its function is as follows. Postsynaptic density scaffolding protein. Binds and cross-links cytoplasmic regions of GRM1, GRM5, ITPR1, DNM3, RYR1, RYR2, SHANK1 and SHANK3. By physically linking GRM1 and GRM5 with ER-associated ITPR1 receptors, it aids the coupling of surface receptors to intracellular calcium release. Negatively regulates T cell activation by inhibiting the calcineurin-NFAT pathway. Acts by competing with calcineurin/PPP3CA for NFAT protein binding, hence preventing NFAT activation by PPP3CA. The protein is Homer protein homolog 3 of Rattus norvegicus (Rat).